The primary structure comprises 211 residues: Large ribosomal subunit protein bL25 (211 aa).

The segment at 175 to 211 (VSEPVEQDLGEESETEEEGAEGEKPAESTGEEPGDDE) is disordered. The segment covering 179–194 (VEQDLGEESETEEEGA) has biased composition (acidic residues).

The protein belongs to the bacterial ribosomal protein bL25 family. CTC subfamily. Part of the 50S ribosomal subunit; part of the 5S rRNA/L5/L18/L25 subcomplex. Contacts the 5S rRNA. Binds to the 5S rRNA independently of L5 and L18.

Functionally, this is one of the proteins that binds to the 5S RNA in the ribosome where it forms part of the central protuberance. The polypeptide is Large ribosomal subunit protein bL25 (Kocuria rhizophila (strain ATCC 9341 / DSM 348 / NBRC 103217 / DC2201)).